Reading from the N-terminus, the 123-residue chain is Protein Wnt-3a (123 aa).

The O-palmitoleoyl serine moiety is linked to residue serine 1. Residues cysteine 89 and cysteine 104 are joined by a disulfide bond. Asparagine 90 carries N-linked (GlcNAc...) asparagine glycosylation.

The protein belongs to the Wnt family. Post-translationally, disulfide bonds have critical and distinct roles in secretion and activity. Loss of each conserved cysteine results in high molecular weight oxidized Wnt oligomers, which are formed through inter-Wnt disulfide bonding. In terms of processing, palmitoleoylation is required for efficient binding to frizzled receptors. Depalmitoleoylation leads to Wnt signaling pathway inhibition.

The protein localises to the secreted. Its subcellular location is the extracellular space. It localises to the extracellular matrix. Functionally, ligand for members of the frizzled family of seven transmembrane receptors. Functions in the canonical Wnt signaling pathway that results in activation of transcription factors of the TCF/LEF family. Required for normal embryonic mesoderm development and formation of caudal somites. Required for normal morphogenesis of the developing neural tube. The sequence is that of Protein Wnt-3a (WNT-3A) from Plethodon jordani (Red-cheeked salamander).